Here is a 165-residue protein sequence, read N- to C-terminus: MKNKLIAKSLLAIAAIGITTTTIASTADASEGYGPREKKPVSINHNIVEYNDGTFKYQSRPKFNTTPKYIKFRHDYNIVEYNDGTFEYGARPQFNKPAAKTEATIKKEQKLIQAQNLVREFEKTHTVSAHRKAQKAVNLVSFEYNVKKMILQERIDQVLKQGLVR.

A signal peptide spans 1-29 (MKNKLIAKSLLAIAAIGITTTTIASTADA).

As to quaternary structure, interacts with host fibrinogen alpha chain/FGA. Interacts with host complement protein C3.

It is found in the secreted. Its function is as follows. Extracellular fibrinogen-binding protein that plays an important role in virulence. By interacting with the alpha chain of fibrinogen and its derivative fibrin, enhances a non-functional interaction between fibrinogen and platelets and is responsible for repression of fibrinogen-dependent platelet aggregation. In addition, assembles a fibrinogen protective shield around the bacteria which results in impaired phagocytic clearance by the host. Mechanistically, interacts with host complement C3b deposited on the surface of the bacterium via its C-terminal and then recruits fibrinogen via its N-terminal. The polypeptide is Fibrinogen-binding protein (fib) (Staphylococcus aureus (strain MRSA252)).